The primary structure comprises 418 residues: MAGRLPACVVDCGTGYTKLGYAGNTEPQFIIPSCIAIKESAKVVDQAQRRVLKGVDDLDFFIGDEAIEKPTYATKWPIRHGIVEDWDLMERFMEQVIFKYLRAEPEDHYFLLTEPPLNTPENREYTAEIMFESFNVPGLYIAVQAVLALAASWTSRQVGERTLTGTVIDSGDGVTHVIPVAEGYVIGSCIKHIPIAGRDITYFIQQLLREREVGIPPEQSLETAKAVKERFSYVCPDLVKEFNKYDTDGTKWIKQYTGINAISKKEFTIDVGYERFLGPEIFFHPEFANPDFTQPISEVVDEVIQNCPIDVRRPLYKNIVLSGGSTMFRDFGRRLQRDLKRTVDARLKLSEELSGGRLKPKPIDVQVITHHMQRYAVWFGGSMLASTPEFYQVCHTKKDYEEIGPSICRHNPVFGVMS.

Alanine 2 bears the N-acetylalanine mark.

It belongs to the actin family. ARP3 subfamily. As to quaternary structure, component of the Arp2/3 complex composed of ACTR2/ARP2, ACTR3/ARP3, ARPC1B/p41-ARC, ARPC2/p34-ARC, ARPC3/p21-ARC, ARPC4/p20-ARC and ARPC5/p16-ARC. Detected in fibroblasts.

It is found in the cytoplasm. It localises to the cytoskeleton. Its subcellular location is the cell projection. The protein localises to the nucleus. Its function is as follows. ATP-binding component of the Arp2/3 complex, a multiprotein complex that mediates actin polymerization upon stimulation by nucleation-promoting factor (NPF). The Arp2/3 complex mediates the formation of branched actin networks in the cytoplasm, providing the force for cell motility. Seems to contact the pointed end of the daughter actin filament. In addition to its role in the cytoplasmic cytoskeleton, the Arp2/3 complex also promotes actin polymerization in the nucleus, thereby regulating gene transcription and repair of damaged DNA. The Arp2/3 complex promotes homologous recombination (HR) repair in response to DNA damage by promoting nuclear actin polymerization, leading to drive motility of double-strand breaks (DSBs). The sequence is that of Actin-related protein 3 (ACTR3) from Gallus gallus (Chicken).